Here is a 393-residue protein sequence, read N- to C-terminus: CCA-adding enzyme (393 aa).

2 residues coordinate ATP: glycine 27 and arginine 30. Residues glycine 27 and arginine 30 each coordinate CTP. Aspartate 40 and aspartate 42 together coordinate Mg(2+). ATP is bound by residues arginine 111, aspartate 154, arginine 157, arginine 160, and arginine 163. Positions 111, 154, 157, 160, and 163 each coordinate CTP.

Belongs to the tRNA nucleotidyltransferase/poly(A) polymerase family. Bacterial CCA-adding enzyme type 3 subfamily. Homodimer. The cofactor is Mg(2+).

It carries out the reaction a tRNA precursor + 2 CTP + ATP = a tRNA with a 3' CCA end + 3 diphosphate. It catalyses the reaction a tRNA with a 3' CCA end + 2 CTP + ATP = a tRNA with a 3' CCACCA end + 3 diphosphate. Its function is as follows. Catalyzes the addition and repair of the essential 3'-terminal CCA sequence in tRNAs without using a nucleic acid template. Adds these three nucleotides in the order of C, C, and A to the tRNA nucleotide-73, using CTP and ATP as substrates and producing inorganic pyrophosphate. tRNA 3'-terminal CCA addition is required both for tRNA processing and repair. Also involved in tRNA surveillance by mediating tandem CCA addition to generate a CCACCA at the 3' terminus of unstable tRNAs. While stable tRNAs receive only 3'-terminal CCA, unstable tRNAs are marked with CCACCA and rapidly degraded. This is CCA-adding enzyme from Listeria monocytogenes serotype 4a (strain HCC23).